The sequence spans 819 residues: MSAAADVIVLSSSPDRIPNGSPVLPAHDPAKLFDLSPPSASPSPVRSPSELFQISTRSRFFELETPSRNKENKTPKEPPVRKVNTTSKAKSASSQDKPKRRGRKPASESQTVLGDSGLAGLAQQSAPKKTAGARKKRVDSEGKRGKATNRTIMGRVAKSGNVQAKPPQEKIMDVSTPNALPPTKPASGVVSLEIDGLQLETAMKRRIDWTPTKDTTARTVESSQQEVAEANPQSFGSLLSEYGFNDISSAQSDVRNLGDDGPTKRRRIELVDSRLFGSSKPASHDIDDKNLTEDSQQKQPEPKQKPKKQTKKFTTLTARVTASYLNNSHEGSDSSSKETTTSRENAATSRTRGSKRKGKATSKPKEPEFIVLSPEAAAKSLENQELIFGTCSQLEREDSPTSLKELQAAISESERYAVAEPSPLSSTLCATPTSRFTTARGLWSVAARDLEGSLIRQTEVVDLVDTPEPAKMTTSTNDSRNEKALEDAATVPPKEPFDLPQSEPPKLKAIPAAKKEPSPAPGLPTIKASDNLKGTTSQHSKPQPKMPNYNGFTDAELSRQVASYGFKPVKNRKAMIDLLQKCWVSKHGKGTTFETQAGSQNTSTEPTPVLTSSEPNTSQKQPRKTATSRKTAAKSKTNPDSNPPPKINSRKTPSSSDATKAPSIQSKPTQPPPIQSLSNVEEIEDSEEETLPSPFRIQNRYTPQPPETRQALPVSKTLYSPSRPKPRTTKSTTNNSATLNQKQPDLADQIFKAMHAQPAGTPSRPSWHEKILMYDPIILEDFATWLNTEGLGLVGEDREVSAAFLRKWCESRGICCCYR.

Disordered stretches follow at residues 1 to 187 (MSAA…KPAS), 208 to 371 (DWTP…EFIV), 467 to 553 (PEPA…NGFT), and 591 to 741 (TTFE…TLNQ). A compositionally biased stretch (low complexity) spans 36–49 (SPPSASPSPVRSPS). Residues 59–80 (RFFELETPSRNKENKTPKEPPV) are compositionally biased toward basic and acidic residues. Polar residues-rich tracts occupy residues 83-95 (VNTTSKAKSASSQ) and 212-237 (TKDTTARTVESSQQEVAEANPQSFGS). Basic and acidic residues-rich tracts occupy residues 256–272 (NLGDDGPTKRRRIELVD) and 282–304 (ASHDIDDKNLTEDSQQKQPEPKQ). 2 stretches are compositionally biased toward polar residues: residues 313–329 (FTTLTARVTASYLNNSH) and 337–351 (KETTTSRENAATSRT). Residues 352 to 362 (RGSKRKGKATS) are compositionally biased toward basic residues. 2 stretches are compositionally biased toward polar residues: residues 532–541 (LKGTTSQHSK) and 592–620 (TFETQAGSQNTSTEPTPVLTSSEPNTSQK). Residues 621–633 (QPRKTATSRKTAA) show a composition bias toward basic residues. A compositionally biased stretch (polar residues) spans 650-668 (RKTPSSSDATKAPSIQSKP). The span at 681–690 (EEIEDSEEET) shows a compositional bias: acidic residues. A compositionally biased stretch (polar residues) spans 729–741 (TKSTTNNSATLNQ).

Belongs to the SLX4 family. Forms a heterodimer with slx1. Phosphorylated in response to DNA damage.

The protein localises to the nucleus. Its function is as follows. Regulatory subunit of the slx1-slx4 structure-specific endonuclease that resolves DNA secondary structures generated during DNA repair and recombination. Has endonuclease activity towards branched DNA substrates, introducing single-strand cuts in duplex DNA close to junctions with ss-DNA. This is Structure-specific endonuclease subunit slx4 (slx4) from Aspergillus flavus (strain ATCC 200026 / FGSC A1120 / IAM 13836 / NRRL 3357 / JCM 12722 / SRRC 167).